The following is a 224-amino-acid chain: Cytidylate kinase (224 aa).

Position 9–17 (9–17 (GPSGSGKGT)) interacts with ATP.

Belongs to the cytidylate kinase family. Type 1 subfamily.

The protein resides in the cytoplasm. It catalyses the reaction CMP + ATP = CDP + ADP. The catalysed reaction is dCMP + ATP = dCDP + ADP. This Saccharophagus degradans (strain 2-40 / ATCC 43961 / DSM 17024) protein is Cytidylate kinase.